The following is a 171-amino-acid chain: Neuronal vesicle trafficking-associated protein 2 (171 aa).

A disordered region spans residues 1–21 (MVKLNSNPSEKGAKPPSVEDG). Residues 1 to 71 (MVKLNSNPSE…FRVPKIAEFT (71 aa)) lie on the Cytoplasmic side of the membrane. The chain crosses the membrane as a helical; Signal-anchor for type II membrane protein span at residues 72 to 92 (VTILVSLALAFLACIVFLVVY). Residues 93-171 (KAFTYDHSCP…EPKPPKTQGH (79 aa)) lie on the Lumenal side of the membrane.

It belongs to the NSG family.

It is found in the membrane. It localises to the golgi apparatus. The protein resides in the trans-Golgi network membrane. The protein localises to the cell projection. Its subcellular location is the dendrite. It is found in the endosome membrane. It localises to the early endosome membrane. The protein resides in the late endosome membrane. The protein localises to the lysosome lumen. Its subcellular location is the cytoplasmic vesicle membrane. It is found in the golgi stack membrane. It localises to the endosome. The protein resides in the multivesicular body membrane. In Bos taurus (Bovine), this protein is Neuronal vesicle trafficking-associated protein 2.